The following is a 683-amino-acid chain: Pre-mRNA-splicing factor CLF1 (683 aa).

13 HAT repeats span residues 40-72 (DWQR…FEYE), 74-106 (RDMR…CELR), 108-140 (RDVN…MEES), 142-173 (GQVE…FETR), 175-206 (GQVE…FERK), 291-323 (SILF…LLEE), 336-367 (ATVK…FLET), 374-407 (LTRS…FEIR), 409-440 (EKLD…LEIK), 442-474 (KEFD…LEEN), 476-513 (GDED…FETD), 515-547 (SEFE…YESS), and 582-620 (ENKE…YESI).

This sequence belongs to the crooked-neck family. Associated with the spliceosome.

Its subcellular location is the nucleus. Involved in pre-mRNA splicing and cell cycle progression. Required for the spliceosome assembly and initiation of the DNA replication. This is Pre-mRNA-splicing factor CLF1 (CLF1) from Eremothecium gossypii (strain ATCC 10895 / CBS 109.51 / FGSC 9923 / NRRL Y-1056) (Yeast).